The sequence spans 159 residues: Protein-export protein SecB (159 aa).

This sequence belongs to the SecB family. Homotetramer, a dimer of dimers. One homotetramer interacts with 1 SecA dimer.

Its subcellular location is the cytoplasm. Functionally, one of the proteins required for the normal export of preproteins out of the cell cytoplasm. It is a molecular chaperone that binds to a subset of precursor proteins, maintaining them in a translocation-competent state. It also specifically binds to its receptor SecA. The polypeptide is Protein-export protein SecB (Nitrobacter winogradskyi (strain ATCC 25391 / DSM 10237 / CIP 104748 / NCIMB 11846 / Nb-255)).